Reading from the N-terminus, the 602-residue chain is MTSTPLDKIRNFSIVAHIDHGKSTLSDRLIQTTGGLTAREMSAQVLDNMDIEKERGITIKAQTVRLTYKAADGETYILNLMDTPGHVDFAYEVSRSLAACEGSILVVDASQGVEAQTLANVYQAIDNNHEIVPVLNKVDLPAADVDRVKAQIEDVIGLDASDAVECSAKTGVGIPEVLEAIVTRLPPPKGDPNAPLKALLVDAWYDAYLGVVVLVRIFDGSLKAGQQVRMMQTGATHRIDKVGVFTPKATDVEYLGPGEVGFFTASIKEVADAAVGDTITDEKKPTAEALKGFKEVVPVVFCGLFPVDAADFEDLRAAVGKLRLNDASFTYEMESSAALGFGFRCGFLGLLHLEIIQERLSREFDLDLIATAPSVVYKIKLRNGDEIELHNPADLPDVMQIEEIAEPWIKATIFTPDDYLGGVIKLCQDRRGMQRELSYVGSRAMVVYDLPLNEVVFDFYDRLKSISKGYASFDYQLEDYRAGDLVKMSILVNSEPVDALSMLVHRSRAESRGRGMCEKMKELIPQHMFVIPIQAAIGGRIIARETVRALRKDVTAKCYGGDASRKKKLLEKQKEGKKRMRQFGKVEIPQEAFIAALKMDED.

The tr-type G domain occupies 7 to 189 (DKIRNFSIVA…AIVTRLPPPK (183 aa)). GTP-binding positions include 19–24 (DHGKST) and 136–139 (NKVD).

Belongs to the TRAFAC class translation factor GTPase superfamily. Classic translation factor GTPase family. LepA subfamily.

Its subcellular location is the cell inner membrane. The catalysed reaction is GTP + H2O = GDP + phosphate + H(+). In terms of biological role, required for accurate and efficient protein synthesis under certain stress conditions. May act as a fidelity factor of the translation reaction, by catalyzing a one-codon backward translocation of tRNAs on improperly translocated ribosomes. Back-translocation proceeds from a post-translocation (POST) complex to a pre-translocation (PRE) complex, thus giving elongation factor G a second chance to translocate the tRNAs correctly. Binds to ribosomes in a GTP-dependent manner. The polypeptide is Elongation factor 4 (Caulobacter vibrioides (strain NA1000 / CB15N) (Caulobacter crescentus)).